Here is a 61-residue protein sequence, read N- to C-terminus: Small ribosomal subunit protein uS14 (61 aa).

The Zn(2+) site is built by Cys-24, Cys-27, Cys-40, and Cys-43.

This sequence belongs to the universal ribosomal protein uS14 family. Zinc-binding uS14 subfamily. Part of the 30S ribosomal subunit. Contacts proteins S3 and S10. It depends on Zn(2+) as a cofactor.

Binds 16S rRNA, required for the assembly of 30S particles and may also be responsible for determining the conformation of the 16S rRNA at the A site. This Ruminiclostridium cellulolyticum (strain ATCC 35319 / DSM 5812 / JCM 6584 / H10) (Clostridium cellulolyticum) protein is Small ribosomal subunit protein uS14.